Consider the following 551-residue polypeptide: Chaperonin GroEL (551 aa).

ATP contacts are provided by residues 29–32 (TMGP), lysine 50, 86–90 (DGTTT), glycine 414, 478–480 (NAA), and aspartate 494.

It belongs to the chaperonin (HSP60) family. Forms a cylinder of 14 subunits composed of two heptameric rings stacked back-to-back. Interacts with the co-chaperonin GroES.

The protein localises to the cytoplasm. The enzyme catalyses ATP + H2O + a folded polypeptide = ADP + phosphate + an unfolded polypeptide.. Functionally, together with its co-chaperonin GroES, plays an essential role in assisting protein folding. The GroEL-GroES system forms a nano-cage that allows encapsulation of the non-native substrate proteins and provides a physical environment optimized to promote and accelerate protein folding. In Legionella jeonii, this protein is Chaperonin GroEL.